The primary structure comprises 344 residues: MSNAITMGIFWHLIGAASAACFYAPFKKVKKWSWETMWSVGGIVSWIILPWAISALLLPNFWAYYSSFSLSTRLPVFLFGAMWGIGNINYGLTMRYLGMSMGIGIAIGITLIVGTLMTPIINGNFDVLISTEGGRMTLLGVLVALIGVGIVTRAGQLKERKMGIKAEEFNLKKGLVLAVMCGIFSAGMSFAMNAAKPMHEAAAALGVDPLYVALPSYVVIMGGGAIINLGFCFIRLAKVKDLSLKADFSLAKSLIIHNVLLSTLGGLMWYLQFFFYAWGHARIPAQYDYISWMLHMSFYVLCGGIVGLVLKEWNNAGRRPVTVLSLGCVVIIVAANIVGIGMAN.

10 helical membrane passes run 4–24 (AITM…CFYA), 38–58 (WSVG…ALLL), 74–94 (LPVF…GLTM), 101–121 (MGIG…TPII), 137–157 (TLLG…AGQL), 175–195 (LVLA…MNAA), 214–234 (LPSY…FCFI), 259–279 (VLLS…YAWG), 290–310 (ISWM…GLVL), and 323–343 (VLSL…IGMA).

This sequence belongs to the L-rhamnose transporter (TC 2.A.7.6) family.

Its subcellular location is the cell inner membrane. The enzyme catalyses L-rhamnopyranose(in) + H(+)(in) = L-rhamnopyranose(out) + H(+)(out). Uptake of L-rhamnose across the cytoplasmic membrane with the concomitant transport of protons into the cell (symport system). The protein is L-rhamnose-proton symporter of Escherichia coli (strain K12 / MC4100 / BW2952).